A 99-amino-acid polypeptide reads, in one-letter code: Protein RnfH (99 aa).

Belongs to the UPF0125 (RnfH) family.

This chain is Protein RnfH, found in Buchnera aphidicola subsp. Acyrthosiphon pisum (strain 5A).